The primary structure comprises 490 residues: MAALMVVGTSSHAGKSLLVTALGRLFHRRGVKVAPFKGQNMALNAYVTAEGHEIGHAQAVQAWACGLEPSVAMNPILLKPQGNMTSQVILKGKPAGVCGAVDYYRDYFEPGWQAVVEALAELQSQYELVICEGAGSPAEVNLRHRDLTNMRVALHLGAPTLLVTDIDRGGALAHVVGTLQVLPPEERALIKGIVINKFRGSLALLQPGLDWLAQYTGVPVVGVLPWLEMALPEEDSMGLFDRRGARKQAQLEIVVIRLPRIANFTDFDALEAEPSVRVRYVSPDGYLGHPDAIILPGSKATIPDLLALEASGMAAQIRAYGGVILGICGGLQILGSTIDDPEGFEGHPGRHPGLGLIEATTVFEPLKITRQVQVESRLPAGEPVVGYEIHQGQTTFAPTLEALFAEPHLGVVSSNRRVWGTYLHGLLDNHAWRRHWLNALRERRGLPQLPVQSGHYREQREEMFERLADAWEPHLPIDGFAQLAGFASQV.

The GATase cobBQ-type domain maps to 250–432; that stretch reads QLEIVVIRLP…LHGLLDNHAW (183 aa). Cysteine 328 (nucleophile) is an active-site residue. Residue histidine 424 is part of the active site.

Belongs to the CobB/CobQ family. CobQ subfamily.

The protein operates within cofactor biosynthesis; adenosylcobalamin biosynthesis. Its function is as follows. Catalyzes amidations at positions B, D, E, and G on adenosylcobyrinic A,C-diamide. NH(2) groups are provided by glutamine, and one molecule of ATP is hydrogenolyzed for each amidation. This Gloeobacter violaceus (strain ATCC 29082 / PCC 7421) protein is Cobyric acid synthase.